The primary structure comprises 342 residues: N-acetyl-gamma-glutamyl-phosphate reductase (342 aa).

The active site involves C149.

Belongs to the NAGSA dehydrogenase family. Type 1 subfamily.

It localises to the cytoplasm. It catalyses the reaction N-acetyl-L-glutamate 5-semialdehyde + phosphate + NADP(+) = N-acetyl-L-glutamyl 5-phosphate + NADPH + H(+). It participates in amino-acid biosynthesis; L-arginine biosynthesis; N(2)-acetyl-L-ornithine from L-glutamate: step 3/4. Catalyzes the NADPH-dependent reduction of N-acetyl-5-glutamyl phosphate to yield N-acetyl-L-glutamate 5-semialdehyde. This is N-acetyl-gamma-glutamyl-phosphate reductase from Ruegeria pomeroyi (strain ATCC 700808 / DSM 15171 / DSS-3) (Silicibacter pomeroyi).